Reading from the N-terminus, the 467-residue chain is ATP synthase subunit beta (467 aa).

Glycine 150 to threonine 157 lines the ATP pocket.

Belongs to the ATPase alpha/beta chains family. As to quaternary structure, F-type ATPases have 2 components, CF(1) - the catalytic core - and CF(0) - the membrane proton channel. CF(1) has five subunits: alpha(3), beta(3), gamma(1), delta(1), epsilon(1). CF(0) has three main subunits: a(1), b(2) and c(9-12). The alpha and beta chains form an alternating ring which encloses part of the gamma chain. CF(1) is attached to CF(0) by a central stalk formed by the gamma and epsilon chains, while a peripheral stalk is formed by the delta and b chains.

The protein resides in the cell inner membrane. The enzyme catalyses ATP + H2O + 4 H(+)(in) = ADP + phosphate + 5 H(+)(out). Functionally, produces ATP from ADP in the presence of a proton gradient across the membrane. The catalytic sites are hosted primarily by the beta subunits. The sequence is that of ATP synthase subunit beta from Vibrio alginolyticus.